Reading from the N-terminus, the 449-residue chain is Glucose-6-phosphate isomerase (449 aa).

The active-site Proton donor is the glutamate 291. Catalysis depends on residues histidine 312 and lysine 426.

It belongs to the GPI family.

It is found in the cytoplasm. It carries out the reaction alpha-D-glucose 6-phosphate = beta-D-fructose 6-phosphate. It functions in the pathway carbohydrate biosynthesis; gluconeogenesis. It participates in carbohydrate degradation; glycolysis; D-glyceraldehyde 3-phosphate and glycerone phosphate from D-glucose: step 2/4. In terms of biological role, catalyzes the reversible isomerization of glucose-6-phosphate to fructose-6-phosphate. In Streptococcus pyogenes serotype M1, this protein is Glucose-6-phosphate isomerase.